We begin with the raw amino-acid sequence, 290 residues long: ATP synthase subunit a (290 aa).

6 consecutive transmembrane segments (helical) span residues 44–64, 104–124, 161–181, 194–214, 233–253, and 260–280; these read AFHV…ILLF, VIAP…AIDL, LSVF…GGFI, ILVQ…TLVA, VFIL…GMGV, and AVFH…LTIV.

The protein belongs to the ATPase A chain family. As to quaternary structure, F-type ATPases have 2 components, CF(1) - the catalytic core - and CF(0) - the membrane proton channel. CF(1) has five subunits: alpha(3), beta(3), gamma(1), delta(1), epsilon(1). CF(0) has three main subunits: a(1), b(2) and c(9-12). The alpha and beta chains form an alternating ring which encloses part of the gamma chain. CF(1) is attached to CF(0) by a central stalk formed by the gamma and epsilon chains, while a peripheral stalk is formed by the delta and b chains.

It is found in the cell inner membrane. Key component of the proton channel; it plays a direct role in the translocation of protons across the membrane. This chain is ATP synthase subunit a, found in Pseudomonas fluorescens (strain ATCC BAA-477 / NRRL B-23932 / Pf-5).